We begin with the raw amino-acid sequence, 332 residues long: Ubiquinone biosynthesis protein COQ4, mitochondrial (332 aa).

Residues 1–24 (MLRLGVSRTPINRQFVGYEQRRHF) constitute a mitochondrion transit peptide. Zn(2+) is bound by residues His210, Asp211, His214, and Glu226.

This sequence belongs to the COQ4 family. Component of a multi-subunit COQ enzyme complex, composed of at least COQ3, COQ4, COQ5, COQ6, COQ7 and COQ9. Zn(2+) serves as cofactor.

Its subcellular location is the mitochondrion inner membrane. The enzyme catalyses a 4-hydroxy-3-methoxy-5-(all-trans-polyprenyl)benzoate + H(+) = a 2-methoxy-6-(all-trans-polyprenyl)phenol + CO2. It participates in cofactor biosynthesis; ubiquinone biosynthesis. Functionally, lyase that catalyzes the C1-decarboxylation of 4-hydroxy-3-methoxy-5-(all-trans-polyprenyl)benzoic acid into 2-methoxy-6-(all-trans-polyprenyl)phenol during ubiquinone biosynthesis. The sequence is that of Ubiquinone biosynthesis protein COQ4, mitochondrial from Zygosaccharomyces rouxii (strain ATCC 2623 / CBS 732 / NBRC 1130 / NCYC 568 / NRRL Y-229).